Consider the following 247-residue polypeptide: 6-carboxyhexanoate--CoA ligase (247 aa).

This sequence belongs to the BioW family. As to quaternary structure, homodimer. The cofactor is Mg(2+).

It catalyses the reaction heptanedioate + ATP + CoA = 6-carboxyhexanoyl-CoA + AMP + diphosphate. Its pathway is metabolic intermediate metabolism; pimeloyl-CoA biosynthesis; pimeloyl-CoA from pimelate: step 1/1. Functionally, catalyzes the transformation of pimelate into pimeloyl-CoA with concomitant hydrolysis of ATP to AMP. This is 6-carboxyhexanoate--CoA ligase from Corynebacterium diphtheriae (strain ATCC 700971 / NCTC 13129 / Biotype gravis).